A 322-amino-acid chain; its full sequence is Secreted RxLR effector protein RXLR-C17 (322 aa).

An N-terminal signal peptide occupies residues 1-25 (MREPAFSFRLHLFAAMILLVDVFSA). The RxLR-dEER signature appears at 43-62 (RQLRARDSQAKNYVIRDEER). Residue N73 is glycosylated (N-linked (GlcNAc...) asparagine).

The protein belongs to the RxLR effector family.

It localises to the secreted. It is found in the host cytoplasm. Its subcellular location is the host nucleus. Its function is as follows. Secreted effector that suppresses pattern-triggered immunity (PTI) in plant host. This chain is Secreted RxLR effector protein RXLR-C17, found in Plasmopara halstedii (Downy mildew of sunflower).